A 2034-amino-acid chain; its full sequence is Pecanex-like protein 3 (2034 aa).

2 helical membrane passes run 33-53 and 54-74; these read CFHL…YMVL and PPSL…FATI. Positions 96–118 are disordered; it reads STMGELEEEPAQGDSNPPRDPGV. At serine 127 the chain carries Phosphoserine. A Phosphothreonine modification is found at threonine 129. Disordered stretches follow at residues 193–242, 260–517, and 540–625; these read IGDL…PLLK, DRAL…LRPP, and VLPA…SHSR. A compositionally biased stretch (polar residues) spans 294–303; it reads KAGSSDSCFS. Basic and acidic residues predominate over residues 305 to 319; the sequence is TDRETLSSFKSEKTN. A glycan (N-linked (GlcNAc...) asparagine) is linked at asparagine 319. The residue at position 370 (threonine 370) is a Phosphothreonine. The segment covering 391–409 has biased composition (basic residues); it reads PSKRQPPLRRHSPPGRAPR. Phosphoserine occurs at positions 392 and 431. A compositionally biased stretch (polar residues) spans 427 to 436; that stretch reads GSELSPASSL. A compositionally biased stretch (low complexity) spans 444–460; that stretch reads TDSSSSTSCYSPESSRG. The segment covering 488–497 has biased composition (polar residues); sequence TQRTPSTASA. At serine 505 the chain carries Phosphoserine. 7 helical membrane passes run 790–812, 819–836, 852–872, 880–900, 903–923, 946–968, and 980–1000; these read VLEN…LLLL, IWVF…YSLL, WVIA…IWLL, PFPP…FFCA, VATV…LPQV, SPLT…YGFC, and HVPV…YHLS. Residue serine 1025 is modified to Phosphoserine. A run of 4 helical transmembrane segments spans residues 1053–1073, 1078–1098, 1244–1264, and 1280–1300; these read LVMC…TVFI, VLGF…HYLL, FVLT…HAFA, and LLSG…VFIM. The residue at position 1697 (serine 1697) is a Phosphoserine. Residue asparagine 1770 is glycosylated (N-linked (GlcNAc...) asparagine). The disordered stretch occupies residues 1844-2034; the sequence is GGLTSLSNNP…AAQPLLEHQY (191 aa). The segment covering 1890-1910 has biased composition (pro residues); it reads RPPPLLQWPPPRLPGPPPASP. Serine 1909 is subject to Phosphoserine. The span at 1925-1939 shows a compositional bias: low complexity; sequence GLLSSEGPSGKWSLG. The residue at position 1955 (serine 1955) is a Phosphoserine. Residues 1969–1978 show a composition bias toward low complexity; sequence LSLSLSLSLS.

This sequence belongs to the pecanex family.

It localises to the membrane. In Homo sapiens (Human), this protein is Pecanex-like protein 3.